We begin with the raw amino-acid sequence, 128 residues long: UPF0325 protein NT01EI_0832 (128 aa).

This sequence belongs to the UPF0325 family.

The sequence is that of UPF0325 protein NT01EI_0832 from Edwardsiella ictaluri (strain 93-146).